The sequence spans 345 residues: MENTASAAPPSSEDLVVDTKENAEPPFCGISLSGSSQAPFHPQSPTLQQDERDELILQQSGEQQLGNSGELRQEEELPKTRRGGWTKGRKRKRSPRDNNAPKAPLTGYVRFMNERREQLRTERPDVPFPEITRIVGSEWSKLPAHEKQHYLDEAEKDKERYTKELQQYQNTDAYQTYSRKAQSRQKGRQQRQEGVRGVPINTEKESILKERPIFDIPIFTEEFLNHSKAREAELRQLRKSNMEFEERNAALQKHVESMRSAVQRLEAELNQEQERNSLLQQHLQSVRQALTHCLQSVPIPGTTEIPTLETIDLYMSRLQNAVLTHPKESEVIISGVREVLSQLEG.

Disordered regions lie at residues methionine 1–proline 124 and glutamine 167–valine 198. Polar residues-rich tracts occupy residues leucine 32–glutamine 48 and leucine 57–asparagine 67. A compositionally biased stretch (basic residues) spans threonine 80 to serine 94. Positions proline 101–glutamine 169 form a DNA-binding region, HMG box. Positions methionine 112–proline 124 are enriched in basic and acidic residues. Residues glutamine 167–lysine 180 are compositionally biased toward polar residues. The stretch at serine 227–leucine 290 forms a coiled coil.

Its subcellular location is the nucleus. In terms of biological role, plays a role in neuronal differentiation. The sequence is that of High mobility group protein 20A (hmg20a) from Xenopus tropicalis (Western clawed frog).